Here is a 169-residue protein sequence, read N- to C-terminus: 2-C-methyl-D-erythritol 2,4-cyclodiphosphate synthase (169 aa).

The a divalent metal cation site is built by D13 and H15. Residues D13–H15 and H40–S41 each bind 4-CDP-2-C-methyl-D-erythritol 2-phosphate. An a divalent metal cation-binding site is contributed by H48. Residues D62–G64, T138–E141, and R148 each bind 4-CDP-2-C-methyl-D-erythritol 2-phosphate.

Belongs to the IspF family. Homotrimer. Requires a divalent metal cation as cofactor.

The enzyme catalyses 4-CDP-2-C-methyl-D-erythritol 2-phosphate = 2-C-methyl-D-erythritol 2,4-cyclic diphosphate + CMP. It functions in the pathway isoprenoid biosynthesis; isopentenyl diphosphate biosynthesis via DXP pathway; isopentenyl diphosphate from 1-deoxy-D-xylulose 5-phosphate: step 4/6. Its function is as follows. Involved in the biosynthesis of isopentenyl diphosphate (IPP) and dimethylallyl diphosphate (DMAPP), two major building blocks of isoprenoid compounds. Catalyzes the conversion of 4-diphosphocytidyl-2-C-methyl-D-erythritol 2-phosphate (CDP-ME2P) to 2-C-methyl-D-erythritol 2,4-cyclodiphosphate (ME-CPP) with a corresponding release of cytidine 5-monophosphate (CMP). This Akkermansia muciniphila (strain ATCC BAA-835 / DSM 22959 / JCM 33894 / BCRC 81048 / CCUG 64013 / CIP 107961 / Muc) protein is 2-C-methyl-D-erythritol 2,4-cyclodiphosphate synthase.